A 242-amino-acid polypeptide reads, in one-letter code: UDP-2,3-diacylglucosamine hydrolase (242 aa).

Mn(2+)-binding residues include D8, H10, D41, N79, and H114. Position 79–80 (N79–R80) interacts with substrate. Substrate-binding residues include D122, K164, K167, and H195. Residues H195 and H197 each contribute to the Mn(2+) site.

This sequence belongs to the LpxH family. It depends on Mn(2+) as a cofactor.

The protein localises to the cell inner membrane. The catalysed reaction is UDP-2-N,3-O-bis[(3R)-3-hydroxytetradecanoyl]-alpha-D-glucosamine + H2O = 2-N,3-O-bis[(3R)-3-hydroxytetradecanoyl]-alpha-D-glucosaminyl 1-phosphate + UMP + 2 H(+). Its pathway is glycolipid biosynthesis; lipid IV(A) biosynthesis; lipid IV(A) from (3R)-3-hydroxytetradecanoyl-[acyl-carrier-protein] and UDP-N-acetyl-alpha-D-glucosamine: step 4/6. Its function is as follows. Hydrolyzes the pyrophosphate bond of UDP-2,3-diacylglucosamine to yield 2,3-diacylglucosamine 1-phosphate (lipid X) and UMP by catalyzing the attack of water at the alpha-P atom. Involved in the biosynthesis of lipid A, a phosphorylated glycolipid that anchors the lipopolysaccharide to the outer membrane of the cell. This Vibrio cholerae serotype O1 (strain ATCC 39315 / El Tor Inaba N16961) protein is UDP-2,3-diacylglucosamine hydrolase.